We begin with the raw amino-acid sequence, 215 residues long: Histone-like protein 18C (215 aa).

The disordered stretch occupies residues Cys-140–Met-215. Basic residues-rich tracts occupy residues Ser-149–Lys-190 and Ala-197–Met-215.

Its function is as follows. Not known. Encoded in the intron of cAMP-dependent protein kinase regulatory chain type I. This chain is Histone-like protein 18C (Mst77F), found in Drosophila melanogaster (Fruit fly).